Consider the following 353-residue polypeptide: Endophilin-A3 (353 aa).

Positions 1-21 (MSVAGLKKQFHKASQLFSEKI) are membrane-binding amphipathic helix. One can recognise a BAR domain in the interval 18-249 (SEKISGAEGT…LQNRINVASS (232 aa)). The segment at 60 to 87 (PNPAYRAKLGMLNTMSKIRGQVKTTGYP) is required for dimerization upon membrane association. The stretch at 180–201 (DEEVKQAVEKFEESKELAERSM) forms a coiled coil. The interaction with ARC stretch occupies residues 218–254 (FVEAALDYHKQSTEILEDLQSKLQNRINVASSRPKRE). Positions 291–350 (VDQPCCQALYDFEPENEGELGFKEGDIITLTNQIDENWYEGMLNGESGFFPHNYVEVMVP) constitute an SH3 domain.

Belongs to the endophilin family. Interacts with ARC. Interacts with SYNJ1 and DNM1. As to expression, highest level in a region associated with endocytosis of yolk proteins in developing oocytes (at protein level). Highest level in small ovarian follicles. High levels in brain and testis. Lower level in adrenal glands.

Its subcellular location is the cytoplasm. The protein resides in the early endosome membrane. In terms of biological role, implicated in endocytosis. May recruit other proteins to membranes with high curvature. Implicated in endocytosis of yolk proteins during oogenesis. This chain is Endophilin-A3, found in Gallus gallus (Chicken).